A 267-amino-acid polypeptide reads, in one-letter code: Thiamine thiazole synthase (267 aa).

Residues Ser41, 60–61 (ER), Gly68, Val132, and 160–162 (HVD) contribute to the NAD(+) site. The Fe cation site is built by Asp162 and His177. Residue Met227 coordinates NAD(+). Arg237 lines the glycine pocket.

Belongs to the THI4 family. Homooctamer; tetramer of dimers. Requires Fe(2+) as cofactor.

The catalysed reaction is hydrogen sulfide + glycine + NAD(+) = ADP-5-ethyl-4-methylthiazole-2-carboxylate + nicotinamide + 3 H2O + H(+). It participates in cofactor biosynthesis; thiamine diphosphate biosynthesis. Its function is as follows. Involved in the biosynthesis of the thiazole moiety of thiamine. Catalyzes the conversion of NAD and glycine to adenosine diphosphate 5-(2-hydroxyethyl)-4-methylthiazole-2-carboxylate (ADT), an adenylated thiazole intermediate, using free sulfide as a source of sulfur. This chain is Thiamine thiazole synthase, found in Saccharolobus islandicus (strain L.S.2.15 / Lassen #1) (Sulfolobus islandicus).